The chain runs to 162 residues: Calcium vector protein (162 aa).

N-acetylalanine is present on Ala-2. EF-hand domains follow at residues 12-47, 49-84, 86-121, and 123-158; these read EEKDECMKIFDIFDRNAENIAPVSDTMDMLTKLGQT, TKRETEAIMKEARGPKGDKKNIGPEEWLTLCSKWVR, DDEEEILRAFKVFDANGDGVIDFDEFKFIMQKVGEE, and LTDAEVEEAMKEADEDGNGVIDIPEFMDLIKKSKNA. Position 96 is an N6,N6,N6-trimethyllysine (Lys-96). Residues Asp-99, Asn-101, Asp-103, and Glu-110 each coordinate Ca(2+). The residue at position 117 (Lys-117) is an N6,N6,N6-trimethyllysine. The Ca(2+) site is built by Asp-136, Asp-138, Asn-140, and Glu-147.

The protein localises to the cytoplasm. Functionally, the exact function of this protein is not yet known. It interacts with CAVPT, a protein also of unknown function, in a calcium-dependent way. This protein binds two calcium ions. The polypeptide is Calcium vector protein (Branchiostoma lanceolatum (Common lancelet)).